A 438-amino-acid polypeptide reads, in one-letter code: UDP-N-acetylglucosamine 1-carboxyvinyltransferase 1 (438 aa).

22–23 is a binding site for phosphoenolpyruvate; it reads KN. R95 contributes to the UDP-N-acetyl-alpha-D-glucosamine binding site. C119 acts as the Proton donor in catalysis. The residue at position 119 (C119) is a 2-(S-cysteinyl)pyruvic acid O-phosphothioketal. UDP-N-acetyl-alpha-D-glucosamine-binding positions include 124–128, D307, and V329; that span reads RPIDL.

The protein belongs to the EPSP synthase family. MurA subfamily.

The protein localises to the cytoplasm. It carries out the reaction phosphoenolpyruvate + UDP-N-acetyl-alpha-D-glucosamine = UDP-N-acetyl-3-O-(1-carboxyvinyl)-alpha-D-glucosamine + phosphate. The protein operates within cell wall biogenesis; peptidoglycan biosynthesis. In terms of biological role, cell wall formation. Adds enolpyruvyl to UDP-N-acetylglucosamine. The sequence is that of UDP-N-acetylglucosamine 1-carboxyvinyltransferase 1 from Lactiplantibacillus plantarum (strain ATCC BAA-793 / NCIMB 8826 / WCFS1) (Lactobacillus plantarum).